The primary structure comprises 344 residues: Uroporphyrinogen decarboxylase (344 aa).

Substrate contacts are provided by residues 25–29, Asp-75, Tyr-152, Ser-207, and His-323; that span reads RQAGR.

The protein belongs to the uroporphyrinogen decarboxylase family. In terms of assembly, homodimer.

It localises to the cytoplasm. It carries out the reaction uroporphyrinogen III + 4 H(+) = coproporphyrinogen III + 4 CO2. The protein operates within porphyrin-containing compound metabolism; protoporphyrin-IX biosynthesis; coproporphyrinogen-III from 5-aminolevulinate: step 4/4. Catalyzes the decarboxylation of four acetate groups of uroporphyrinogen-III to yield coproporphyrinogen-III. In Ruegeria pomeroyi (strain ATCC 700808 / DSM 15171 / DSS-3) (Silicibacter pomeroyi), this protein is Uroporphyrinogen decarboxylase.